The chain runs to 205 residues: MSAYRKGNIFIISAASGTGKTTLVSRLLANHNGLRVSVSHTTRPPREGEANGVHYHFVSKEEFESLIAQEAFLEYADVFGNYYGTGAEGVNALAAAGYDVILEIDVQGAAQVRDALPEAVGIFILPPSFDVLAARLNGRGTDSREVIQRRLSKARHEIEQSVLFDFVVVNDDLARAEEDLRHIVNACRLKRSRQLGFIADLLENS.

The 179-residue stretch at 7 to 185 (GNIFIISAAS…AEEDLRHIVN (179 aa)) folds into the Guanylate kinase-like domain. 14-21 (AASGTGKT) is a binding site for ATP.

Belongs to the guanylate kinase family.

It is found in the cytoplasm. The catalysed reaction is GMP + ATP = GDP + ADP. In terms of biological role, essential for recycling GMP and indirectly, cGMP. The polypeptide is Guanylate kinase (gmk) (Neisseria meningitidis serogroup B (strain ATCC BAA-335 / MC58)).